Consider the following 53-residue polypeptide: ATP synthase protein 8 (53 aa).

A helical transmembrane segment spans residues 9 to 29 (WLILFFIFSITLVIFNILNYF).

It belongs to the ATPase protein 8 family. In terms of assembly, F-type ATPases have 2 components, CF(1) - the catalytic core - and CF(0) - the membrane proton channel.

The protein resides in the mitochondrion membrane. Its function is as follows. Mitochondrial membrane ATP synthase (F(1)F(0) ATP synthase or Complex V) produces ATP from ADP in the presence of a proton gradient across the membrane which is generated by electron transport complexes of the respiratory chain. F-type ATPases consist of two structural domains, F(1) - containing the extramembraneous catalytic core and F(0) - containing the membrane proton channel, linked together by a central stalk and a peripheral stalk. During catalysis, ATP synthesis in the catalytic domain of F(1) is coupled via a rotary mechanism of the central stalk subunits to proton translocation. Part of the complex F(0) domain. Minor subunit located with subunit a in the membrane. The chain is ATP synthase protein 8 (mt:ATPase8) from Anopheles quadrimaculatus (Common malaria mosquito).